A 386-amino-acid chain; its full sequence is Ovalbumin (386 aa).

An N-acetylglycine modification is found at glycine 2. Positions 22–48 form a signal peptide, not cleaved; the sequence is HHANENIFYSPFTIISALAMVYLGAKD. Serine 69 carries the post-translational modification Phosphoserine. A disulfide bridge links cysteine 74 with cysteine 121. N-linked (GlcNAc...) asparagine glycosylation is found at asparagine 293 and asparagine 312. Serine 345 is modified (phosphoserine). Asparagine 372 carries N-linked (GlcNAc...) asparagine glycosylation.

This sequence belongs to the serpin family. Ov-serpin subfamily. The signal sequence is not cleaved. The functional signal for membrane translocation of ovalbumin becomes accessible when the nascent chain is 50 to 60 residues long. The hydrophobic sequence which lies between residues 27 and 43 folds back on the preceding residues to form an amphipathic hairpin structure which is the signal element recognized by the membrane. As to expression, major protein of egg white.

The protein localises to the secreted. Storage protein of egg white. Lack protease inhibitory activity. The polypeptide is Ovalbumin (SERPINB14) (Meleagris gallopavo (Wild turkey)).